The sequence spans 396 residues: Elongation factor Tu (396 aa).

A tr-type G domain is found at 10–206; sequence KPHVNVGTIG…ALDSYIPTPE (197 aa). The G1 stretch occupies residues 19–26; sequence GHVDHGKT. Residue 19 to 26 coordinates GTP; sequence GHVDHGKT. A Mg(2+)-binding site is contributed by Thr26. The interval 60–64 is G2; sequence GITIN. The tract at residues 81 to 84 is G3; the sequence is DCPG. GTP is bound by residues 81–85 and 136–139; these read DCPGH and NKCD. The interval 136 to 139 is G4; that stretch reads NKCD. The G5 stretch occupies residues 174-176; sequence SAL.

The protein belongs to the TRAFAC class translation factor GTPase superfamily. Classic translation factor GTPase family. EF-Tu/EF-1A subfamily. As to quaternary structure, monomer.

Its subcellular location is the cytoplasm. The catalysed reaction is GTP + H2O = GDP + phosphate + H(+). Its function is as follows. GTP hydrolase that promotes the GTP-dependent binding of aminoacyl-tRNA to the A-site of ribosomes during protein biosynthesis. In Azoarcus sp. (strain BH72), this protein is Elongation factor Tu.